Consider the following 418-residue polypeptide: Glutamyl-tRNA(Gln) amidotransferase subunit D (418 aa).

The region spanning 81–407 (PDVKIISTGG…EEAKEMVKKS (327 aa)) is the Asparaginase/glutaminase domain. Residues T91, T166, D167, and K243 contribute to the active site.

The protein belongs to the asparaginase 1 family. GatD subfamily. As to quaternary structure, heterodimer of GatD and GatE.

It catalyses the reaction L-glutamyl-tRNA(Gln) + L-glutamine + ATP + H2O = L-glutaminyl-tRNA(Gln) + L-glutamate + ADP + phosphate + H(+). Functionally, allows the formation of correctly charged Gln-tRNA(Gln) through the transamidation of misacylated Glu-tRNA(Gln) in organisms which lack glutaminyl-tRNA synthetase. The reaction takes place in the presence of glutamine and ATP through an activated gamma-phospho-Glu-tRNA(Gln). The GatDE system is specific for glutamate and does not act on aspartate. The chain is Glutamyl-tRNA(Gln) amidotransferase subunit D from Archaeoglobus fulgidus (strain ATCC 49558 / DSM 4304 / JCM 9628 / NBRC 100126 / VC-16).